Reading from the N-terminus, the 215-residue chain is L-fuculose phosphate aldolase (215 aa).

Residues 28 to 29 (GN), 43 to 44 (TG), and 71 to 72 (SS) contribute to the substrate site. The active-site Proton donor/acceptor is Glu73. Glu73, His92, His94, and His155 together coordinate Zn(2+).

The protein belongs to the aldolase class II family. AraD/FucA subfamily. Homotetramer. Zn(2+) is required as a cofactor.

The enzyme catalyses L-fuculose 1-phosphate = (S)-lactaldehyde + dihydroxyacetone phosphate. Its pathway is carbohydrate degradation; L-fucose degradation; L-lactaldehyde and glycerone phosphate from L-fucose: step 3/3. With respect to regulation, inhibited by phosphoglycolohydroxamate (PGH). Its function is as follows. Involved in the degradation of L-fucose and D-arabinose. Catalyzes the reversible cleavage of L-fuculose 1-phosphate (Fuc1P) to yield dihydroxyacetone phosphate (DHAP) and L-lactaldehyde. Also able to catalyze the reversible cleavage of D-ribulose 1-phosphate, but FucA has a higher affinity for L-fuculose 1-phosphate and L-lactaldehyde than for D-ribulose 1-phosphate and glycolaldehyde, respectively. FucA possesses a high specificity for the dihydroxyacetone phosphate (DHAP), but accepts a great variety of different aldehydes and has a strong preference for L-configurated alpha-hydroxy aldehydes. FucA generates a vicinal diol unit having the absolute (3R,4R)-cis configuration (D-erythro). This is L-fuculose phosphate aldolase from Escherichia coli (strain K12).